The following is a 445-amino-acid chain: Anaerobilin synthase (445 aa).

Residues 52–287 (TASPRKRLVY…LQGCDFMDDA (236 aa)) enclose the Radical SAM core domain. Tyr61 lines the S-adenosyl-L-methionine pocket. [4Fe-4S] cluster contacts are provided by Cys67 and Cys71. Phe73 serves as a coordination point for S-adenosyl-L-methionine. Position 74 (Cys74) interacts with [4Fe-4S] cluster. S-adenosyl-L-methionine-binding positions include Gly118, 119 to 120 (GT), Glu151, Gln178, Arg190, and Asp215.

Belongs to the anaerobic coproporphyrinogen-III oxidase family. ChuW/HutW subfamily. [4Fe-4S] cluster serves as cofactor.

The enzyme catalyses 2 reduced [flavodoxin] + heme b + 2 S-adenosyl-L-methionine = anaerobilin + 2 oxidized [flavodoxin] + Fe(2+) + 5'-deoxyadenosine + L-methionine + S-adenosyl-L-homocysteine. With respect to regulation, inhibited by exposure to molecular oxygen. Involved in heme degradation and iron utilization under anaerobic conditions. Catalyzes a radical-mediated mechanism facilitating iron liberation and the production of the tetrapyrrole product anaerobilin. Can use heme, mesoheme and deuteroheme as substrates. The protein is Anaerobilin synthase of Escherichia coli O157:H7.